The chain runs to 167 residues: 3-isopropylmalate dehydratase small subunit (167 aa).

The protein belongs to the LeuD family. LeuD type 2 subfamily. In terms of assembly, heterodimer of LeuC and LeuD.

The catalysed reaction is (2R,3S)-3-isopropylmalate = (2S)-2-isopropylmalate. Its pathway is amino-acid biosynthesis; L-leucine biosynthesis; L-leucine from 3-methyl-2-oxobutanoate: step 2/4. Its function is as follows. Catalyzes the isomerization between 2-isopropylmalate and 3-isopropylmalate, via the formation of 2-isopropylmaleate. The chain is 3-isopropylmalate dehydratase small subunit from Wolinella succinogenes (strain ATCC 29543 / DSM 1740 / CCUG 13145 / JCM 31913 / LMG 7466 / NCTC 11488 / FDC 602W) (Vibrio succinogenes).